Here is a 126-residue protein sequence, read N- to C-terminus: Fatty acid-binding protein, liver (126 aa).

Alanine 2 bears the N-acetylalanine mark. Cholate-binding residues include arginine 56, glutamine 57, lysine 77, histidine 99, and glutamine 101.

This sequence belongs to the calycin superfamily. Fatty-acid binding protein (FABP) family.

The protein localises to the cytoplasm. Binds free fatty acids and their coenzyme A derivatives, bilirubin, and some other small molecules in the cytoplasm. May be involved in intracellular lipid transport. Binds 2 molecules of cholate per subunit. This is Fatty acid-binding protein, liver (FABP1) from Gallus gallus (Chicken).